The chain runs to 258 residues: Countin-1 (258 aa).

An N-terminal signal peptide occupies residues 1 to 21; the sequence is MNKLFSLILALFLVNSAVVSS. The region spanning 22–106 is the Saposin B-type domain; the sequence is LDSCSICVDF…EKISVCKTND (85 aa). Cystine bridges form between Cys-25/Cys-102, Cys-28/Cys-96, and Cys-56/Cys-69. N-linked (GlcNAc...) asparagine glycans are attached at residues Asn-121 and Asn-215. Over residues 233–248 the composition is skewed to low complexity; that stretch reads AGSFSGSSQSTQTGAA. Residues 233-258 form a disordered region; the sequence is AGSFSGSSQSTQTGAASGSGSGFALF. A compositionally biased stretch (gly residues) spans 249–258; sequence SGSGSGFALF.

Belongs to the countin family. As to quaternary structure, component of the counting factor (CF) complex, which includes cf60, cf50, cf45-1 and ctnA.

The protein resides in the secreted. Cell-counting factor that limits the maximum size of the multicellular structure. May down-regulate the expression of gp24, which mediates cell adhesion. In Dictyostelium discoideum (Social amoeba), this protein is Countin-1 (ctnA).